Here is a 106-residue protein sequence, read N- to C-terminus: Urease subunit beta (106 aa).

It belongs to the urease beta subunit family. In terms of assembly, heterotrimer of UreA (gamma), UreB (beta) and UreC (alpha) subunits. Three heterotrimers associate to form the active enzyme.

It is found in the cytoplasm. The catalysed reaction is urea + 2 H2O + H(+) = hydrogencarbonate + 2 NH4(+). It participates in nitrogen metabolism; urea degradation; CO(2) and NH(3) from urea (urease route): step 1/1. This Acinetobacter baumannii (strain ATCC 17978 / DSM 105126 / CIP 53.77 / LMG 1025 / NCDC KC755 / 5377) protein is Urease subunit beta.